A 177-amino-acid polypeptide reads, in one-letter code: Small ribosomal subunit protein uS5 (177 aa).

The region spanning L21–V84 is the S5 DRBM domain.

The protein belongs to the universal ribosomal protein uS5 family. Part of the 30S ribosomal subunit. Contacts proteins S4 and S8.

Functionally, with S4 and S12 plays an important role in translational accuracy. Located at the back of the 30S subunit body where it stabilizes the conformation of the head with respect to the body. This Nitrosomonas europaea (strain ATCC 19718 / CIP 103999 / KCTC 2705 / NBRC 14298) protein is Small ribosomal subunit protein uS5.